The sequence spans 220 residues: Metalloproteinase inhibitor 2 (220 aa).

An N-terminal signal peptide occupies residues 1-26 (MGAAARSLRLALGLLLLATLLRPADA). Cysteine 27 contributes to the Zn(2+) binding site. 2 involved in metalloproteinase-binding regions span residues 27–30 (CSCS) and 95–96 (SA). 6 disulfides stabilise this stretch: cysteine 27–cysteine 98, cysteine 29–cysteine 127, cysteine 39–cysteine 152, cysteine 154–cysteine 201, cysteine 159–cysteine 164, and cysteine 172–cysteine 193. The region spanning 27 to 152 (CSCSPVHPQQ…SLNHRYQMGC (126 aa)) is the NTR domain.

It belongs to the protease inhibitor I35 (TIMP) family. As to quaternary structure, interacts (via the C-terminal) with MMP2 (via the C-terminal PEX domain); the interaction inhibits the MMP2 activity. The activity of TIMP2 is dependent on the presence of disulfide bonds.

The protein localises to the secreted. Complexes with metalloproteinases (such as collagenases) and irreversibly inactivates them by binding to their catalytic zinc cofactor. In Rattus norvegicus (Rat), this protein is Metalloproteinase inhibitor 2 (Timp2).